We begin with the raw amino-acid sequence, 1226 residues long: Probable DNA-binding protein SNT1 (1226 aa).

Disordered stretches follow at residues 1 to 219 (MGYP…YSRS) and 264 to 331 (LKST…PDNI). A compositionally biased stretch (basic residues) spans 11 to 27 (GDKKRYHYSNNPNRRHP). Residues 31-64 (YSKNSFPKSSNNGFVSSPTADNSTNPSVTPSTAS) are compositionally biased toward polar residues. 2 stretches are compositionally biased toward low complexity: residues 81-103 (PRPSRYDPSSVSRPSSSSYSSTR) and 116-131 (SSSTTSSTPESMNTST). Composition is skewed to polar residues over residues 132–143 (ITHTNTDIGNSR) and 150–170 (SRYNPQSTSSTNVTHFPSALS). Serine 187 bears the Phosphoserine mark. A compositionally biased stretch (low complexity) spans 202–211 (NNVSSVNNNS). Over residues 264-275 (LKSTHSQSSPSL) the composition is skewed to polar residues. A compositionally biased stretch (basic and acidic residues) spans 280–304 (FHDANKLDKPEASVKVETPSKDETK). At serine 395 the chain carries Phosphoserine. A coiled-coil region spans residues 539 to 591 (DLQKKYEKECEILTKLSENLRKEEIENKRKEHELMEQKRREEGIETEKEKSLR). Residues 569 to 590 (EHELMEQKRREEGIETEKEKSL) are compositionally biased toward basic and acidic residues. A disordered region spans residues 569–605 (EHELMEQKRREEGIETEKEKSLRHPSSSSSSRRRNRA). Residues 668–720 (DASDNFTDHEHSLFLEGYLIHPKKFGKISHYMGGLRSPEECVLHYYRTKKTVN) enclose the SANT domain. Over residues 732-745 (RKMSAAAKRRKRKE) the composition is skewed to basic residues. The interval 732 to 796 (RKMSAAAKRR…SEVKGDPLGT (65 aa)) is disordered. Residues 748–758 (NDEEVEVDESK) are compositionally biased toward acidic residues. The span at 759 to 773 (EESTNTIEKEEKSEN) shows a compositional bias: basic and acidic residues. Threonine 796 is modified (phosphothreonine). Positions 884-938 (APEHKTSYWSVRESQLFPELLKEFGSQWSLISEKLGTKSTTMVRNYYQRNAARNG) constitute an HTH myb-type domain. The H-T-H motif DNA-binding region spans 911 to 934 (WSLISEKLGTKSTTMVRNYYQRNA). Serine 1037 carries the phosphoserine modification. Positions 1172-1194 (SQGTPTFPLPAPRTSPISRAPPK) are disordered.

Identified in a Set3C complex with SET3, HST1, HOS2, SIF2, CPR1 and HOS4.

It localises to the nucleus. Functionally, part of the Set3C complex, which is required to repress early/middle sporulation genes during meiosis. This is Probable DNA-binding protein SNT1 (SNT1) from Saccharomyces cerevisiae (strain ATCC 204508 / S288c) (Baker's yeast).